A 248-amino-acid chain; its full sequence is Proteasome subunit alpha type-1 (248 aa).

The protein belongs to the peptidase T1A family. In terms of assembly, the 26S proteasome consists of a 20S proteasome core and two 19S regulatory subunits. The 20S proteasome core is composed of 28 subunits that are arranged in four stacked rings, resulting in a barrel-shaped structure. The two end rings are each formed by seven alpha subunits, and the two central rings are each formed by seven beta subunits. The catalytic chamber with the active sites is on the inside of the barrel.

The protein localises to the cytoplasm. The protein resides in the nucleus. Functionally, the proteasome is a multicatalytic proteinase complex which is characterized by its ability to cleave peptides with Arg, Phe, Tyr, Leu, and Glu adjacent to the leaving group at neutral or slightly basic pH. The proteasome has an ATP-dependent proteolytic activity. In Dictyostelium discoideum (Social amoeba), this protein is Proteasome subunit alpha type-1 (psmA1).